Here is a 506-residue protein sequence, read N- to C-terminus: Probable malate:quinone oxidoreductase (506 aa).

This sequence belongs to the MQO family. It depends on FAD as a cofactor.

It carries out the reaction (S)-malate + a quinone = a quinol + oxaloacetate. Its pathway is carbohydrate metabolism; tricarboxylic acid cycle; oxaloacetate from (S)-malate (quinone route): step 1/1. The chain is Probable malate:quinone oxidoreductase from Rhodococcus jostii (strain RHA1).